We begin with the raw amino-acid sequence, 335 residues long: Pregnancy-specific beta-1-glycoprotein 5 (335 aa).

Positions 1 to 34 are cleaved as a signal peptide; it reads MGPLSAPPCTQHITWKGLLLTASLLNFWNLPITA. In terms of domain architecture, Ig-like V-type spans 35-144; that stretch reads QVTIEALPPK…TGYFTFNLYL (110 aa). Residues asparagine 104 and asparagine 111 are each glycosylated (N-linked (GlcNAc...) asparagine). The Cell attachment site signature appears at 127–129; that stretch reads RGD. Ig-like C2-type domains lie at 147–234 and 239–317; these read PKPY…VTLN and PDLP…KSMT. 2 disulfide bridges follow: cysteine 169–cysteine 217 and cysteine 261–cysteine 301. Residues asparagine 175 and asparagine 210 are each glycosylated (N-linked (GlcNAc...) asparagine).

It belongs to the immunoglobulin superfamily. CEA family. As to expression, synthesized by syncytiotrophoblast of the placenta.

It is found in the secreted. The protein is Pregnancy-specific beta-1-glycoprotein 5 (PSG5) of Homo sapiens (Human).